Here is a 317-residue protein sequence, read N- to C-terminus: Ribosomal RNA small subunit methyltransferase H (317 aa).

Residues 30–32 (GGH), aspartate 50, tyrosine 74, aspartate 95, and glutamine 102 each bind S-adenosyl-L-methionine.

The protein belongs to the methyltransferase superfamily. RsmH family.

It localises to the cytoplasm. The catalysed reaction is cytidine(1402) in 16S rRNA + S-adenosyl-L-methionine = N(4)-methylcytidine(1402) in 16S rRNA + S-adenosyl-L-homocysteine + H(+). In terms of biological role, specifically methylates the N4 position of cytidine in position 1402 (C1402) of 16S rRNA. The polypeptide is Ribosomal RNA small subunit methyltransferase H (Nitrosomonas europaea (strain ATCC 19718 / CIP 103999 / KCTC 2705 / NBRC 14298)).